Here is a 367-residue protein sequence, read N- to C-terminus: Bi-functional coumaroyl CoA and feruloyl CoA ortho-hydroxylase Diox4 (367 aa).

Positions 207-317 (IREPMLVGSR…RISVPLFVNP (111 aa)) constitute a Fe2OG dioxygenase domain. Tyr-223 serves as a coordination point for 2-oxoglutarate. Fe cation-binding residues include His-238, Asp-240, and His-298. Residues Arg-308 and Ser-310 each coordinate 2-oxoglutarate.

This sequence belongs to the iron/ascorbate-dependent oxidoreductase family. It depends on L-ascorbate as a cofactor. Fe(2+) is required as a cofactor.

The enzyme catalyses (E)-4-coumaroyl-CoA + 2-oxoglutarate + O2 = (E)-2,4-dihydroxycinnamoyl-CoA + succinate + CO2. It carries out the reaction (E)-feruloyl-CoA + 2-oxoglutarate + O2 = (E)-6-hydroxyferuloyl-CoA + succinate + CO2. The protein operates within phenylpropanoid metabolism. Repressed by the competitive inhibitor psoralen, but not by umbelliferone, xanthotoxin, bergapten and isopimpinellin. 2-oxoglutarate (OG)- and Fe(II)-dependent dioxygenase (2OGD) involved in scopoletin and umbelliferone biosynthesis. Converts feruloyl CoA into 6'-hydroxyferuloyl CoA, and p-coumaroyl CoA into 2,4-dihydroxycinnamoyl-CoA. Has no activity with cinnamic acid, caffeic acid, p-coumaric acid, ferulic acid, cinnamoyl-CoA and caffeoyl-CoA. The protein is Bi-functional coumaroyl CoA and feruloyl CoA ortho-hydroxylase Diox4 of Ruta graveolens (Common rue).